Here is an 856-residue protein sequence, read N- to C-terminus: Inactive rhomboid protein 2 (856 aa).

Residues 1–115 (MASADKNGGS…PGFRRQASLS (115 aa)) are disordered. Residues 1–409 (MASADKNGGS…HRPYFTYWLT (409 aa)) lie on the Cytoplasmic side of the membrane. Ser-90 is subject to Phosphoserine. Residues 94-106 (PRSRWQESSEKRP) show a composition bias toward basic and acidic residues. Ser-113 and Ser-117 each carry phosphoserine. A disordered region spans residues 165–184 (PSQEAPSFQGTESPKPCKMP). Residues 191–271 (ARGRAFRHPE…GQRCRVVKRS (81 aa)) are involved in interaction with FRMD8. Phosphoserine occurs at positions 323, 325, and 328. A helical membrane pass occupies residues 410–430 (FVHVIITLLVICTYGIAPVGF). At 431–660 (AQHVTTQLVL…PDQFYRLWLS (230 aa)) the chain is on the lumenal side. The tract at residues 531–553 (GPPMDKSDLGQKRTSGAVCHQDP) is disordered. Residues 661–681 (LFLHAGVVHCLVSVVFQMTIL) traverse the membrane as a helical segment. The Cytoplasmic portion of the chain corresponds to 682–692 (RDLEKLAGWHR). A helical membrane pass occupies residues 693-713 (IAIIFILSGITGNLASAIFLP). The Lumenal portion of the chain corresponds to 714-715 (YR). The chain crosses the membrane as a helical span at residues 716-736 (AEVGPAGSQFGLLACLFVELF). The Cytoplasmic segment spans residues 737–747 (QSWPLLERPWK). A helical membrane pass occupies residues 748–768 (AFLNLSAIVLFLFICGLLPWI). Over 769–773 (DNIAH) the chain is Lumenal. Residues 774-794 (IFGFLSGLLLAFAFLPYITFG) traverse the membrane as a helical segment. At 795–802 (TSDKYRKR) the chain is on the cytoplasmic side. The helical transmembrane segment at 803-823 (ALILVSLLAFAGLFAALVLWL) threads the bilayer. Topologically, residues 824–856 (YIYPINWPWIEHLTCFPFTSRFCEKYELDQVLH) are lumenal.

This sequence belongs to the peptidase S54 family. As to quaternary structure, interacts with EGF. Interacts (via cytoplasmic N-terminus) with FRMD8/iTAP; this interaction leads to mutual protein stabilization. Interacts with ADAM17/TACE. Found in the epidermis and esophageal epithelium.

The protein resides in the endoplasmic reticulum membrane. It is found in the cell membrane. Its function is as follows. Regulates ADAM17 protease, a sheddase of the epidermal growth factor (EGF) receptor ligands and TNF, thereby plays a role in sleep, cell survival, proliferation, migration and inflammation. Does not exhibit any protease activity on its own. This is Inactive rhomboid protein 2 (RHBDF2) from Homo sapiens (Human).